Here is a 265-residue protein sequence, read N- to C-terminus: Small ribosomal subunit protein uS3 (265 aa).

Positions 43–111 constitute a KH type-2 domain; it reads IRTMLKTSLD…QIQLNILEVK (69 aa). Residues 217 to 265 are disordered; sequence AREQANQKSSRPERRNDRSDGRTGDRRTNAPRTAPAAEAAPVAAAGVEA. The segment covering 226–244 has biased composition (basic and acidic residues); that stretch reads SRPERRNDRSDGRTGDRRT. Low complexity predominate over residues 250-265; that stretch reads APAAEAAPVAAAGVEA.

It belongs to the universal ribosomal protein uS3 family. In terms of assembly, part of the 30S ribosomal subunit. Forms a tight complex with proteins S10 and S14.

In terms of biological role, binds the lower part of the 30S subunit head. Binds mRNA in the 70S ribosome, positioning it for translation. This Clavibacter michiganensis subsp. michiganensis (strain NCPPB 382) protein is Small ribosomal subunit protein uS3.